The sequence spans 674 residues: tRNA-guanine(15) transglycosylase (674 aa).

Catalysis depends on Asp-90, which acts as the Nucleophile. Asp-125 and Ala-192 together coordinate substrate. Residues Cys-275, Cys-277, and Cys-280 each coordinate Zn(2+). Residues 596-671 form the PUA domain; that stretch reads HNRVVVSEDS…QAIKTRKWKK (76 aa).

The protein belongs to the archaeosine tRNA-ribosyltransferase family. The cofactor is Zn(2+).

The catalysed reaction is guanosine(15) in tRNA + 7-cyano-7-deazaguanine = 7-cyano-7-carbaguanosine(15) in tRNA + guanine. It participates in tRNA modification; archaeosine-tRNA biosynthesis. Its function is as follows. Exchanges the guanine residue with 7-cyano-7-deazaguanine (preQ0) at position 15 in the dihydrouridine loop (D-loop) of archaeal tRNAs. This is tRNA-guanine(15) transglycosylase from Methanosphaera stadtmanae (strain ATCC 43021 / DSM 3091 / JCM 11832 / MCB-3).